The chain runs to 122 residues: Glycine cleavage system H protein (122 aa).

Residues methionine 19 to threonine 101 form the Lipoyl-binding domain. Position 60 is an N6-lipoyllysine (lysine 60).

Belongs to the GcvH family. As to quaternary structure, the glycine cleavage system is composed of four proteins: P, T, L and H. It depends on (R)-lipoate as a cofactor.

In terms of biological role, the glycine cleavage system catalyzes the degradation of glycine. The H protein shuttles the methylamine group of glycine from the P protein to the T protein. This Bartonella tribocorum (strain CIP 105476 / IBS 506) protein is Glycine cleavage system H protein.